Consider the following 104-residue polypeptide: Vegetative-specific protein H7 (104 aa).

Positions 43 to 97 (IQRARNALKMTQKELAFKINERPGVINEYESGSAIPSQAVLSKLEKALNVKLRGK) constitute an HTH cro/C1-type domain. A DNA-binding region (H-T-H motif) is located at residues 54–73 (QKELAFKINERPGVINEYES).

The protein is Vegetative-specific protein H7 (cinD-1) of Dictyostelium discoideum (Social amoeba).